Reading from the N-terminus, the 350-residue chain is C5a anaphylatoxin chemotactic receptor 1 (350 aa).

At 1–37 (MDSFNYTTPDYGHYDDKDTLDLNTPVDKTSNTLRVPD) the chain is on the extracellular side. An N-linked (GlcNAc...) asparagine glycan is attached at N5. Residues 10–18 (DYGHYDDKD) are required for CHIPS binding. Sulfotyrosine is present on residues Y11 and Y14. The tract at residues 21–30 (DLNTPVDKTS) is involved in C5a binding. A helical membrane pass occupies residues 38–64 (ILALVIFAVVFLVGVLGNALVVWVTAF). Over 65–69 (EAKRT) the chain is Cytoplasmic. Residues 70 to 93 (INAIWFLNLAVADFLSCLALPILF) traverse the membrane as a helical segment. The Extracellular segment spans residues 94 to 110 (TSIVQHHHWPFGGAACS). An intrachain disulfide couples C109 to C188. Residues 111–132 (ILPSLILLNMYASILLLATISA) form a helical membrane-spanning segment. Topologically, residues 133–153 (DRFLLVFKPIWCQNFRGAGLA) are cytoplasmic. The chain crosses the membrane as a helical span at residues 154-174 (WIACAVAWGLALLLTIPSFLY). Over 175–200 (RVVREEYFPPKVLCGVDYSHDKRRER) the chain is Extracellular. Residues 201 to 226 (AVAIVRLVLGFLWPLLTLTICYTFIL) traverse the membrane as a helical segment. Residues 227–242 (LRTWSRRATRSTKTLK) are Cytoplasmic-facing. The helical transmembrane segment at 243–265 (VVVAVVASFFIFWLPYQVTGIMM) threads the bilayer. Residues 266–282 (SFLEPSSPTFLLLKKLD) lie on the Extracellular side of the membrane. A helical transmembrane segment spans residues 283–303 (SLCVSFAYINCCINPIIYVVA). Residues 304–350 (GQGFQGRLRKSLPSLLRNVLTEESVVRESKSFTRSTVDTMAQKTQAV) are Cytoplasmic-facing. Phosphoserine is present on residues S314, S317, S327, S332, S334, and S338.

Belongs to the G-protein coupled receptor 1 family. In terms of assembly, homodimer. May also form higher-order oligomers. Interacts (when phosphorylated) with ARRB1 and ARRB2; the interaction is associated with internalization of C5aR. Interacts (via N-terminal domain) with S.aureus chemotaxis inhibitory protein (CHIPS); the interaction blocks the receptor and may thus inhibit the immune response. Post-translationally, sulfation plays a critical role in the association of C5aR with C5a, but no significant role in the ability of the receptor to transduce a signal and mobilize calcium in response to a small a small peptide agonist. Sulfation at Tyr-14 is important for CHIPS binding. Phosphorylated on serine residues in response to C5a binding, resulting in internalization of the receptor and short-term desensitization to the ligand. The key residues involved in this process are Ser-334 and Ser-338.

The protein resides in the cell membrane. It is found in the cytoplasmic vesicle. In terms of biological role, receptor for the chemotactic and inflammatory peptide anaphylatoxin C5a. The ligand interacts with at least two sites on the receptor: a high-affinity site on the extracellular N-terminus, and a second site in the transmembrane region which activates downstream signaling events. Receptor activation stimulates chemotaxis, granule enzyme release, intracellular calcium release and superoxide anion production. This chain is C5a anaphylatoxin chemotactic receptor 1 (C5AR1), found in Homo sapiens (Human).